The following is a 78-amino-acid chain: uncharacterized protein (78 aa).

A run of 2 helical transmembrane segments spans residues 25–45 and 50–70; these read IITA…DEVV and KCAD…FVFV.

Its subcellular location is the membrane. This is an uncharacterized protein from Saccharomyces cerevisiae (strain ATCC 204508 / S288c) (Baker's yeast).